Reading from the N-terminus, the 138-residue chain is Ribulose bisphosphate carboxylase small subunit (138 aa).

This sequence belongs to the RuBisCO small chain family. Heterohexadecamer of 8 large and 8 small subunits.

It localises to the plastid. It is found in the chloroplast. Its function is as follows. RuBisCO catalyzes two reactions: the carboxylation of D-ribulose 1,5-bisphosphate, the primary event in carbon dioxide fixation, as well as the oxidative fragmentation of the pentose substrate in the photorespiration process. Both reactions occur simultaneously and in competition at the same active site. Although the small subunit is not catalytic it is essential for maximal activity. This Antithamnion sp. (Red alga) protein is Ribulose bisphosphate carboxylase small subunit.